The following is a 2327-amino-acid chain: Voltage-dependent N-type calcium channel subunit alpha-1B (2327 aa).

The tract at residues 1–37 is disordered; that stretch reads MVRFGDELGGRYGGTGGGERARGGGAGGAGGPGQGGL. At 1–90 the chain is on the cytoplasmic side; sequence MVRFGDELGG…DNVVRKYAKR (90 aa). Residues 10–37 are compositionally biased toward gly residues; that stretch reads GRYGGTGGGERARGGGAGGAGGPGQGGL. Arg-22 is subject to Omega-N-methylarginine. The I repeat unit spans residues 82 to 359; that stretch reads NVVRKYAKRI…LVLGVLSGEF (278 aa). The chain crosses the membrane as a helical span at residues 91 to 114; sequence ITEWPPFEYMILATIIANCIVLAL. Residues 115 to 131 lie on the Extracellular side of the membrane; that stretch reads EQHLPDGDKTPMSERLD. The chain crosses the membrane as a helical span at residues 132 to 152; sequence DTEPYFIGIFCFEAGIKIIAL. Topologically, residues 153–163 are cytoplasmic; it reads GFVFHKGSYLR. The helical transmembrane segment at 164–182 threads the bilayer; the sequence is NGWNVMDFVVVLTGILATA. Over 183 to 187 the chain is Extracellular; that stretch reads GTDFD. Residues 188–211 form a helical membrane-spanning segment; sequence LRTLRAVRVLRPLKLVSGIPSLQV. Residues 212 to 221 are Cytoplasmic-facing; the sequence is VLKSIMKAMV. Residues 222–244 traverse the membrane as a helical segment; the sequence is PLLQIGLLLFFAILMFAIIGLEF. Over 245-331 the chain is Extracellular; sequence YMGKFHKACF…NTNDAAGNTW (87 aa). An N-linked (GlcNAc...) asparagine glycan is attached at Asn-256. The chain crosses the membrane as a helical span at residues 332-356; sequence NWLYFIPLIIIGSFFMLNLVLGVLS. Residues 357–482 are Cytoplasmic-facing; the sequence is GEFAKERERV…FFIRRMVKAQ (126 aa). Residues 379–396 form a binding to the beta subunit region; the sequence is QQIERELNGYLEWIFKAE. Residue Ser-411 is modified to Phosphoserine. 451-458 is an ATP binding site; it reads ASLKSGKT. The stretch at 468–712 is one II repeat; it reads EKMFRFFIRR…VFLAIAVDNL (245 aa). A helical transmembrane segment spans residues 483-501; it reads SFYWVVLCVVALNTLCVAM. Residues 502–511 are Extracellular-facing; sequence VHYNQPQRLT. Residues 512-534 form a helical membrane-spanning segment; it reads TALYFAEFVFLGLFLTEMSLKMY. The Cytoplasmic portion of the chain corresponds to 535 to 544; the sequence is GLGPRSYFRS. Ser-544 serves as a coordination point for a 1,2-diacyl-sn-glycero-3-phospho-(1D-myo-inositol-4,5-bisphosphate). A helical membrane pass occupies residues 545–566; it reads SFNCFDFGVIVGSIFEVVWAAI. The Extracellular portion of the chain corresponds to 567-573; the sequence is KPGTSFG. Residues 574 to 586 form a helical membrane-spanning segment; the sequence is ISVLRALRLLRIF. Residues Arg-584 and Lys-587 each coordinate a 1,2-diacyl-sn-glycero-3-phospho-(1D-myo-inositol-4,5-bisphosphate). At 587 to 604 the chain is on the cytoplasmic side; that stretch reads KVTKYWNSLRNLVVSLLN. A helical membrane pass occupies residues 605-630; sequence SMKSIISLLFLLFLFIVVFALLGMQL. Over 631–682 the chain is Extracellular; it reads FGGQFNFQDETPTTNFDTFPAAILTVFQILTGEDWNAVMYHGIESQGGVSKG. A helical transmembrane segment spans residues 683 to 709; sequence MFSSFYFIVLTLFGNYTLLNVFLAIAV. At 710–1140 the chain is on the cytoplasmic side; sequence DNLANAQELT…FCHYIVTMRY (431 aa). Ser-745, Ser-748, and Ser-783 each carry phosphoserine. Disordered stretches follow at residues 802–1015 and 1042–1066; these read TRHV…KEPH and EQPE…PSTT. Composition is skewed to basic and acidic residues over residues 805–826, 869–885, 914–924, 961–972, and 988–1015; these read VRPD…RDGL, EQDR…EERA, GSPEEATEREP, GPREAENNEEPT, and PERE…KEPH. The span at 1050–1066 shows a compositional bias: polar residues; it reads QRNVTRMGSQPSDPSTT. Ser-1058 bears the Phosphoserine mark. One copy of the III repeat lies at 1126-1412; it reads NLLRRFCHYI…IFVALIIITF (287 aa). The chain crosses the membrane as a helical span at residues 1141-1159; that stretch reads FEMVILVVIALSSIALAAE. Residues 1160–1167 are Extracellular-facing; it reads DPVRTDSF. Residues 1168–1192 traverse the membrane as a helical segment; it reads RNNALKYMDYIFTGVFTFEMVIKMI. The Cytoplasmic portion of the chain corresponds to 1193 to 1206; it reads DLGLLLHPGAYFRD. A helical transmembrane segment spans residues 1207–1231; that stretch reads LWNILDFIVVSGALVAFAFSSFMGG. Residues 1232 to 1237 lie on the Extracellular side of the membrane; it reads SKGKDI. Residues 1238 to 1258 form a helical membrane-spanning segment; the sequence is NTIKSLRVLRVLRPLKTIKRL. The Cytoplasmic segment spans residues 1259–1276; sequence PKLKAVFDCVVNSLKNVL. The helical transmembrane segment at 1277 to 1296 threads the bilayer; the sequence is NILIVYMLFMFIFAVIAVQL. At 1297–1383 the chain is on the extracellular side; the sequence is FKGKFFYCTD…EQGPSPGFRM (87 aa). A helical membrane pass occupies residues 1384–1409; the sequence is ELSIFYVVYFVVFPFFFVNIFVALII. The Cytoplasmic portion of the chain corresponds to 1410–1464; sequence ITFQEQGDKVMSECSLEKNERACIDFAISAKPLTRYMPQNKQSFQYKTWTFVVSP. Residues 1449-1702 form an IV repeat; the sequence is NKQSFQYKTW…LFVAVIMDNF (254 aa). Residues 1465–1483 traverse the membrane as a helical segment; the sequence is PFEYFIMAMIALNTVVLMM. The Extracellular portion of the chain corresponds to 1484–1491; the sequence is KFYDAPYE. Residues 1492-1516 traverse the membrane as a helical segment; it reads YELMLKCLNIVFTSMFSMECILKII. Topologically, residues 1517-1526 are cytoplasmic; it reads AFGVLNYFRD. The chain crosses the membrane as a helical span at residues 1527–1548; the sequence is AWNVFDFVTVLGSITDILVTEI. Residues 1549 to 1554 lie on the Extracellular side of the membrane; the sequence is ANNFIN. A glycan (N-linked (GlcNAc...) asparagine) is linked at Asn-1554. A helical transmembrane segment spans residues 1555 to 1573; sequence LSFLRLFRAARLIKLLRQG. At 1574–1592 the chain is on the cytoplasmic side; the sequence is YTIRILLWTFVQSFKALPY. A helical transmembrane segment spans residues 1593–1612; the sequence is VCLLIAMLFFIYAIIGMQVF. Residues 1613-1674 are Extracellular-facing; the sequence is GNIALDDDTS…ANASECGSDF (62 aa). A glycan (N-linked (GlcNAc...) asparagine) is linked at Asn-1666. The helical transmembrane segment at 1675–1698 threads the bilayer; that stretch reads AYFYFVSFIFLCSFLMLNLFVAVI. The Cytoplasmic portion of the chain corresponds to 1699 to 2327; sequence MDNFEYLTRD…YHHPDQDHWC (629 aa). Residues 1715–1750 enclose the EF-hand domain; it reads HHLDEFIRVWAEYDPAACGRISYNDMFEMLKHMSPP. The Ca(2+) site is built by Asp-1728, Arg-1734, and Asp-1739. Residues 1972-2193 are disordered; it reads TLRGPDGEPQ…TPRPSITYKT (222 aa). The segment covering 2039-2053 has biased composition (basic residues); it reads SHHHHHRCHRRRDKK. Position 2056 is a phosphoserine (Ser-2056). Over residues 2088–2104 the composition is skewed to basic and acidic residues; it reads CRRDRKQERGRSQERRQ. Polar residues-rich tracts occupy residues 2131 to 2141 and 2152 to 2168; these read PSLSSHPTSPT and GSGS…SGAS. Ser-2212, Ser-2221, and Ser-2244 each carry phosphoserine. Disordered regions lie at residues 2230-2249 and 2273-2292; these read EPLS…PYLG and ATNS…TSQS. The segment covering 2276–2292 has biased composition (low complexity); that stretch reads SGRSSRTSYVSSLTSQS.

It belongs to the calcium channel alpha-1 subunit (TC 1.A.1.11) family. CACNA1B subfamily. In terms of assembly, multisubunit complex consisting of alpha-1, alpha-2, beta and delta subunits in a 1:1:1:1 ratio. The channel activity is directed by the pore-forming and voltage-sensitive alpha-1 subunit. In many cases, this subunit is sufficient to generate voltage-sensitive calcium channel activity. The auxiliary subunits beta and alpha-2/delta linked by a disulfide bridge regulate the channel activity. Interacts with RIMS1. Interacts with FMR1 (via C-terminus); this interaction induces a decrease in the number of presynaptic functional CACNA1B channels at the cell surface. In terms of processing, phosphorylated in vitro by CaM-kinase II, PKA, PKC and CGPK. In terms of tissue distribution, widespread expression throughout the brain. Highest levels in pyramidal cell layers C1, C2 and C3 of the hippocampus, in the dentate gyrus, in the cortex layers 2 et 4, in the subiculum and the habenula.

It is found in the membrane. The enzyme catalyses Ca(2+)(in) = Ca(2+)(out). Its activity is regulated as follows. Is specifically blocked by omega-conotoxin GVIA. Is specifically blocked by omega-conotoxin MVIIA (ziconotide). Is insensitive to dihydropyridines (DHP). Functionally, voltage-sensitive calcium channels (VSCC) mediate the entry of calcium ions into excitable cells and are also involved in a variety of calcium-dependent processes, including muscle contraction, hormone or neurotransmitter release, gene expression, cell motility, cell division and cell death. This alpha-1B subunit gives rise to N-type calcium currents. N-type calcium channels belong to the 'high-voltage activated' (HVA) group. They are involved in pain signaling. Calcium channels containing alpha-1B subunit may play a role in directed migration of immature neurons. Mediates Ca(2+) release probability at hippocampal neuronal soma and synaptic terminals. This chain is Voltage-dependent N-type calcium channel subunit alpha-1B (Cacna1b), found in Mus musculus (Mouse).